We begin with the raw amino-acid sequence, 107 residues long: Nucleoid-associated protein BMEA_A0033 (107 aa).

Belongs to the YbaB/EbfC family. As to quaternary structure, homodimer.

The protein resides in the cytoplasm. It localises to the nucleoid. Its function is as follows. Binds to DNA and alters its conformation. May be involved in regulation of gene expression, nucleoid organization and DNA protection. In Brucella melitensis biotype 2 (strain ATCC 23457), this protein is Nucleoid-associated protein BMEA_A0033.